The chain runs to 500 residues: Trehalose-6-phosphate synthase (500 aa).

A D-glucose 6-phosphate-binding site is contributed by Arg28. UDP-alpha-D-glucose is bound at residue 48–49 (GG). 2 residues coordinate D-glucose 6-phosphate: Tyr104 and Asp158. UDP-alpha-D-glucose contacts are provided by Arg300 and Lys305. A D-glucose 6-phosphate-binding site is contributed by Arg338. 403–407 (LVAKE) lines the UDP-alpha-D-glucose pocket.

This sequence belongs to the glycosyltransferase 20 family. In terms of assembly, homotetramer.

It carries out the reaction ADP-alpha-D-glucose + D-glucose 6-phosphate = alpha,alpha-trehalose 6-phosphate + ADP + H(+). It catalyses the reaction CDP-alpha-D-glucose + D-glucose 6-phosphate = alpha,alpha-trehalose 6-phosphate + CDP + H(+). The enzyme catalyses GDP-alpha-D-glucose + D-glucose 6-phosphate = alpha,alpha-trehalose 6-phosphate + GDP + H(+). The catalysed reaction is TDP-alpha-D-glucose + D-glucose 6-phosphate = 5-methyl-UDP + alpha,alpha-trehalose 6-phosphate + H(+). It carries out the reaction D-glucose 6-phosphate + UDP-alpha-D-glucose = alpha,alpha-trehalose 6-phosphate + UDP + H(+). Its pathway is glycan biosynthesis; trehalose biosynthesis. Probably involved in the osmoprotection via the biosynthesis of trehalose and in the production of glycogen and alpha-glucan via the TreS-Pep2 branch involved in the biosynthesis of maltose-1-phosphate (M1P). Catalyzes the transfer of glucose from UDP-glucose (UDP-Glc) to D-glucose 6-phosphate (Glc-6-P) to form trehalose-6-phosphate. Probably also able to use ADP-Glc, CDP-Glc, GDP-Glc and TDP-Glc as glucosyl donors. In Mycobacterium ulcerans (strain Agy99), this protein is Trehalose-6-phosphate synthase.